We begin with the raw amino-acid sequence, 397 residues long: Zinc finger CCCH domain-containing protein 33 (397 aa).

5 consecutive C3H1-type zinc fingers follow at residues 40 to 68 (RPGE…HPRD), 85 to 113 (RIGQ…HPRN), 131 to 159 (RSNE…HPQP), 274 to 302 (RPGQ…HPRD), and 320 to 348 (RPGE…HPMR). Residues 361–397 (EVVETSTGKSRRLSVSETRQAATTSSGKDTTIDNTQQ) are disordered. Polar residues predominate over residues 364-397 (ETSTGKSRRLSVSETRQAATTSSGKDTTIDNTQQ).

It is found in the nucleus. The sequence is that of Zinc finger CCCH domain-containing protein 33 (ZFN1) from Arabidopsis thaliana (Mouse-ear cress).